Reading from the N-terminus, the 486-residue chain is Glycogen synthase (486 aa).

An ADP-alpha-D-glucose-binding site is contributed by Lys-20.

Belongs to the glycosyltransferase 1 family. Bacterial/plant glycogen synthase subfamily.

It carries out the reaction [(1-&gt;4)-alpha-D-glucosyl](n) + ADP-alpha-D-glucose = [(1-&gt;4)-alpha-D-glucosyl](n+1) + ADP + H(+). It participates in glycan biosynthesis; glycogen biosynthesis. Functionally, synthesizes alpha-1,4-glucan chains using ADP-glucose. The protein is Glycogen synthase of Aeromonas hydrophila subsp. hydrophila (strain ATCC 7966 / DSM 30187 / BCRC 13018 / CCUG 14551 / JCM 1027 / KCTC 2358 / NCIMB 9240 / NCTC 8049).